The primary structure comprises 209 residues: Uridine kinase (209 aa).

12-19 provides a ligand contact to ATP; it reads GGSGGGKT.

This sequence belongs to the uridine kinase family.

It is found in the cytoplasm. It carries out the reaction uridine + ATP = UMP + ADP + H(+). The enzyme catalyses cytidine + ATP = CMP + ADP + H(+). Its pathway is pyrimidine metabolism; CTP biosynthesis via salvage pathway; CTP from cytidine: step 1/3. It participates in pyrimidine metabolism; UMP biosynthesis via salvage pathway; UMP from uridine: step 1/1. This Streptococcus agalactiae serotype V (strain ATCC BAA-611 / 2603 V/R) protein is Uridine kinase.